Here is a 495-residue protein sequence, read N- to C-terminus: MAGKLVSLVPPLLLAAVGLAGLLLLCVPTQDVREPPALKYGIVLDAGSSHTSMFVYKWPADKENDTGIVGQHSSCDVRGGGISSYANDPSRAGQSLVECLEQALRDVPKDRYASTPLYLGATAGMRLLNLTSPEATAKVLEAVTQTLTRYPFDFRGARILSGQDEGVFGWVTANYLLENFIKYGWVGRWIRPRKGTLGAMDLGGASTQITFETTSPSEDPDNEVHLRLYGQHYRVYTHSFLCYGRDQVLQRLLASALQIHRFHPCWPKGYSTQVLLREVYQSPCTMGQRPQTFNSSATVSLSGTSNAALCRDLVSGLFNISSCPFSQCSFNGVFQPPVAGNFIAFSAFYYTVDFLKTVMGLPVGTLKQLEDATETTCNQTWAELQARVPGQQTRLPDYCAVAMFIHQLLSRGYRFDERSFRGVVFEKKAADTAVGWALGYMLNLTNLIPADLPGLRKGTHFSSWVALLLLFTVLILAALVLLLRQVRSAKSPGAL.

The Cytoplasmic segment spans residues 1-4 (MAGK). Residues 5–25 (LVSLVPPLLLAAVGLAGLLLL) form a helical membrane-spanning segment. Residues 26-462 (CVPTQDVREP…PGLRKGTHFS (437 aa)) are Extracellular-facing. N-linked (GlcNAc...) asparagine glycosylation occurs at asparagine 64. Cysteine 75 and cysteine 99 form a disulfide bridge. N-linked (GlcNAc...) asparagine glycosylation is present at asparagine 129. Glutamate 165 serves as the catalytic Proton acceptor. An ATP-binding site is contributed by 204-208 (GASTQ). Intrachain disulfides connect cysteine 242–cysteine 284 and cysteine 265–cysteine 310. Asparagine 294 and asparagine 319 each carry an N-linked (GlcNAc...) asparagine glycan. Disulfide bonds link cysteine 323–cysteine 328 and cysteine 377–cysteine 399. Asparagine 378 and asparagine 443 each carry an N-linked (GlcNAc...) asparagine glycan. A helical transmembrane segment spans residues 463 to 483 (SWVALLLLFTVLILAALVLLL). Topologically, residues 484–495 (RQVRSAKSPGAL) are cytoplasmic.

Belongs to the GDA1/CD39 NTPase family. The cofactor is Ca(2+). Requires Mg(2+) as cofactor.

It localises to the cell membrane. Its function is as follows. In the nervous system, could hydrolyze ATP and other nucleotides to regulate purinergic neurotransmission. Hydrolyzes ADP only to a marginal extent. The sequence is that of Ectonucleoside triphosphate diphosphohydrolase 2 (Entpd2) from Mus musculus (Mouse).